Here is an 812-residue protein sequence, read N- to C-terminus: Outer membrane usher protein FaeD (812 aa).

The first 35 residues, Met1 to Ala35, serve as a signal peptide directing secretion. A disulfide bond links Cys793 and Cys811.

It belongs to the fimbrial export usher family.

The protein resides in the cell outer membrane. Its function is as follows. Involved in the export and assembly of K88ab fimbrial subunits across the outer membrane. This is Outer membrane usher protein FaeD (faeD) from Escherichia coli.